Consider the following 235-residue polypeptide: Large ribosomal subunit protein uL1 (235 aa).

Belongs to the universal ribosomal protein uL1 family. As to quaternary structure, part of the 50S ribosomal subunit.

Binds directly to 23S rRNA. The L1 stalk is quite mobile in the ribosome, and is involved in E site tRNA release. Functionally, protein L1 is also a translational repressor protein, it controls the translation of the L11 operon by binding to its mRNA. In Prochlorococcus marinus (strain MIT 9313), this protein is Large ribosomal subunit protein uL1.